A 211-amino-acid polypeptide reads, in one-letter code: MSNENDDLSPQRRAPRLNERILSSISRRSVAAHPWHDLEIGPEAPSVFNVVIEISKGSKVKYELDKKTGLIKVDRILYSSVVYPQNYGFIPRTLCEDNDPMDVLVLMQEPVLPGCFLRARAIGLMPMIDQGEKDDKIIAVCADDPEYRHYTDIKQLPPHRLAEIRRFFEDYKKNENKDVAVDDFLPPNSAVNAIQYSMDLYAEYILHSLRK.

The substrate site is built by lysine 61 and arginine 75. Tyrosine 83 serves as the catalytic Proton donor. Substrate is bound at residue tyrosine 87. Residues aspartate 97, aspartate 102, and aspartate 134 each coordinate Mg(2+). Tyrosine 171 lines the substrate pocket.

It belongs to the PPase family. Mg(2+) serves as cofactor.

The protein localises to the cytoplasm. It catalyses the reaction diphosphate + H2O = 2 phosphate + H(+). With respect to regulation, strongly inhibited by Ca(2+). In terms of biological role, catalyzes the irreversible hydrolysis of pyrophosphate (PPi) to phosphate. This Solanum tuberosum (Potato) protein is Soluble inorganic pyrophosphatase PPA1.